The following is a 93-amino-acid chain: Acylphosphatase (93 aa).

Residues 5-93 form the Acylphosphatase-like domain; the sequence is TAILRVTGFV…EERKTFDIVY (89 aa). Active-site residues include Arg20 and Asn38.

This sequence belongs to the acylphosphatase family.

It catalyses the reaction an acyl phosphate + H2O = a carboxylate + phosphate + H(+). The polypeptide is Acylphosphatase (acyP) (Listeria monocytogenes serotype 4b (strain F2365)).